A 547-amino-acid chain; its full sequence is ATP synthase subunit alpha (547 aa).

172–179 (GDRKTGKT) is a binding site for ATP.

The protein belongs to the ATPase alpha/beta chains family. As to quaternary structure, F-type ATPases have 2 components, CF(1) - the catalytic core - and CF(0) - the membrane proton channel. CF(1) has five subunits: alpha(3), beta(3), gamma(1), delta(1), epsilon(1). CF(0) has three main subunits: a(1), b(2) and c(9-12). The alpha and beta chains form an alternating ring which encloses part of the gamma chain. CF(1) is attached to CF(0) by a central stalk formed by the gamma and epsilon chains, while a peripheral stalk is formed by the delta and b chains.

The protein resides in the cell membrane. The enzyme catalyses ATP + H2O + 4 H(+)(in) = ADP + phosphate + 5 H(+)(out). Its function is as follows. Produces ATP from ADP in the presence of a proton gradient across the membrane. The alpha chain is a regulatory subunit. The sequence is that of ATP synthase subunit alpha from Corynebacterium glutamicum (strain R).